We begin with the raw amino-acid sequence, 552 residues long: Steroid transmembrane transporter SLC22A24 (552 aa).

A run of 12 helical transmembrane segments spans residues 16–36 (FQILQTAFFCICILIAYPHML), 144–164 (LISVAQSLFMVAQLLGGLIFG), 178–198 (CCLLLFAISGTCAAIAPTFPV), 204–224 (FLGGICLMNIITNAVSTMSEW), 235–255 (GIILNSCNIGQILMGGLGFVI), 267–287 (IPLFILFLFSRSVLESAQWLI), 350–370 (IFYLSFVRFAATIPFLGLMLN), 378–398 (IFLFQIIFGAVTFIVRCAVLL), 407–427 (ISQMVSSFLVGIPILVNIFLS), 435–455 (VALATLGIGATTAIFTTHTVH), 469–489 (IGLNAMFSRLGATLAPLLMIL), and 496–516 (LPWIIYGVSSILAGLVVLLLP). Positions 524–552 (PNTIQDVENNRRDSRKTKQEDISMKVTQF) are disordered. A compositionally biased stretch (basic and acidic residues) spans 531-546 (ENNRRDSRKTKQEDIS).

It belongs to the major facilitator (TC 2.A.1) superfamily. Organic cation transporter (TC 2.A.1.19) family.

The protein localises to the cell membrane. It carries out the reaction estrone 3-sulfate(out) + glutarate(in) = estrone 3-sulfate(in) + glutarate(out). The enzyme catalyses 17beta-estradiol 17-O-(beta-D-glucuronate)(out) + glutarate(in) = 17beta-estradiol 17-O-(beta-D-glucuronate)(in) + glutarate(out). The catalysed reaction is taurocholate(out) + glutarate(in) = taurocholate(in) + glutarate(out). It catalyses the reaction glycocholate(out) + glutarate(in) = glycocholate(in) + glutarate(out). It carries out the reaction dehydroepiandrosterone 3-sulfate(out) + glutarate(in) = dehydroepiandrosterone 3-sulfate(in) + glutarate(out). The enzyme catalyses glutarate(in) + succinate(out) = glutarate(out) + succinate(in). In terms of biological role, renal transmembrane organic anion/dicarboxylate exchanger that participates in the reabsorption of conjugated steroids, as well as bile acids, driven by an outward gradient of dicarboxylates such as glutarate or succinate. Transports taurocholate, estrone 3-sulfate, and estradiol-17-glucuronide (17beta-estradiol 17-O-(beta-D-glucuronate)), but not androstanediol glucuronide (5alpha-androstane-3alpha,17beta-diol 3-O-(beta-D-glucuronate)). This is Steroid transmembrane transporter SLC22A24 from Equus caballus (Horse).